Reading from the N-terminus, the 103-residue chain is Large ribosomal subunit protein bL21 (103 aa).

It belongs to the bacterial ribosomal protein bL21 family. In terms of assembly, part of the 50S ribosomal subunit. Contacts protein L20.

Functionally, this protein binds to 23S rRNA in the presence of protein L20. The chain is Large ribosomal subunit protein bL21 from Acinetobacter baumannii (strain AB307-0294).